The primary structure comprises 501 residues: 4,4'-diapophytoene desaturase (4,4'-diaponeurosporene-forming) (501 aa).

Residue 5 to 17 participates in FAD binding; it reads VVGAGVTGLAAAA.

Belongs to the carotenoid/retinoid oxidoreductase family. CrtN subfamily.

It carries out the reaction 15-cis-4,4'-diapophytoene + 3 FAD + 3 H(+) = all-trans-4,4'-diaponeurosporene + 3 FADH2. It participates in carotenoid biosynthesis; staphyloxanthin biosynthesis; staphyloxanthin from farnesyl diphosphate: step 2/5. Its function is as follows. Involved in the biosynthesis of the yellow-orange carotenoid staphyloxanthin, which plays a role in the virulence via its protective function against oxidative stress. Catalyzes three successive dehydrogenation reactions that lead to the introduction of three double bonds into 4,4'-diapophytoene (dehydrosqualene), with 4,4'-diapophytofluene and 4,4'-diapo-zeta-carotene as intermediates, and 4,4'-diaponeurosporene (the major deep-yellow pigment in staphylococci strains) as the end product. The chain is 4,4'-diapophytoene desaturase (4,4'-diaponeurosporene-forming) from Staphylococcus haemolyticus (strain JCSC1435).